We begin with the raw amino-acid sequence, 419 residues long: UDP-N-acetylglucosamine 1-carboxyvinyltransferase (419 aa).

Position 22–23 (22–23) interacts with phosphoenolpyruvate; sequence KN. Arg95 provides a ligand contact to UDP-N-acetyl-alpha-D-glucosamine. Cys119 acts as the Proton donor in catalysis. Cys119 carries the post-translational modification 2-(S-cysteinyl)pyruvic acid O-phosphothioketal. Residues 164-167, Asp308, and Ile330 each bind UDP-N-acetyl-alpha-D-glucosamine; that span reads KVSV.

The protein belongs to the EPSP synthase family. MurA subfamily.

It is found in the cytoplasm. The enzyme catalyses phosphoenolpyruvate + UDP-N-acetyl-alpha-D-glucosamine = UDP-N-acetyl-3-O-(1-carboxyvinyl)-alpha-D-glucosamine + phosphate. Its pathway is cell wall biogenesis; peptidoglycan biosynthesis. In terms of biological role, cell wall formation. Adds enolpyruvyl to UDP-N-acetylglucosamine. This is UDP-N-acetylglucosamine 1-carboxyvinyltransferase from Rickettsia massiliae (strain Mtu5).